The primary structure comprises 224 residues: uncharacterized protein (224 aa).

Residues 11–42 form a Matrin-type zinc finger; sequence YYCKYCQIFVKDTPFARRSHEQTYKHQDAIKK. Residues 67 to 80 show a composition bias toward low complexity; that stretch reads ATATTASAVSSELA. Disordered regions lie at residues 67 to 158 and 172 to 224; these read ATAT…RNRE and VKPK…YDQS. Over residues 87 to 98 the composition is skewed to basic residues; sequence KEHPKLRPSKKK. Low complexity predominate over residues 108-122; it reads TSSTETDTISTTHTS. The span at 175–199 shows a compositional bias: basic and acidic residues; sequence KNLDKVPKLAENEGNKSLESKESNE. A compositionally biased stretch (basic residues) spans 203–216; sequence VFKKKKSGKLRTKS.

It is found in the nucleus. The protein resides in the nucleolus. This is an uncharacterized protein from Schizosaccharomyces pombe (strain 972 / ATCC 24843) (Fission yeast).